The sequence spans 406 residues: Phosphopentomutase (406 aa).

6 residues coordinate Mn(2+): aspartate 10, aspartate 305, histidine 310, aspartate 346, histidine 347, and histidine 358.

This sequence belongs to the phosphopentomutase family. Mn(2+) serves as cofactor.

It localises to the cytoplasm. It carries out the reaction 2-deoxy-alpha-D-ribose 1-phosphate = 2-deoxy-D-ribose 5-phosphate. The enzyme catalyses alpha-D-ribose 1-phosphate = D-ribose 5-phosphate. The protein operates within carbohydrate degradation; 2-deoxy-D-ribose 1-phosphate degradation; D-glyceraldehyde 3-phosphate and acetaldehyde from 2-deoxy-alpha-D-ribose 1-phosphate: step 1/2. Functionally, isomerase that catalyzes the conversion of deoxy-ribose 1-phosphate (dRib-1-P) and ribose 1-phosphate (Rib-1-P) to deoxy-ribose 5-phosphate (dRib-5-P) and ribose 5-phosphate (Rib-5-P), respectively. This is Phosphopentomutase from Vibrio cholerae serotype O1 (strain ATCC 39315 / El Tor Inaba N16961).